The chain runs to 351 residues: Synaptonemal complex central element protein 1 (351 aa).

Over residues 1 to 10 (MAGRSLTSKA) the composition is skewed to polar residues. Disordered stretches follow at residues 1–31 (MAGR…TSSQ) and 267–351 (KCQQ…KELF). A coiled-coil region spans residues 52–290 (RVEVLINRIN…ELEKHGMQVP (239 aa)).

This sequence belongs to the SYCE family. As to quaternary structure, homodimer. Found in a complex with SYCP1 and SYCE2. Interacts with SYCP1, SYCE2 and SYCE3. Interacts with SIX6OS1.

It localises to the nucleus. The protein resides in the chromosome. Functionally, major component of the transverse central element of synaptonemal complexes (SCS), formed between homologous chromosomes during meiotic prophase. Requires SYCP1 in order to be incorporated into the central element. May have a role in the synaptonemal complex assembly, stabilization and recombination. This is Synaptonemal complex central element protein 1 (SYCE1) from Homo sapiens (Human).